The sequence spans 333 residues: Tetraacyldisaccharide 4'-kinase (333 aa).

An ATP-binding site is contributed by 57 to 64 (IVGGAGKT).

This sequence belongs to the LpxK family.

The enzyme catalyses a lipid A disaccharide + ATP = a lipid IVA + ADP + H(+). The protein operates within glycolipid biosynthesis; lipid IV(A) biosynthesis; lipid IV(A) from (3R)-3-hydroxytetradecanoyl-[acyl-carrier-protein] and UDP-N-acetyl-alpha-D-glucosamine: step 6/6. Functionally, transfers the gamma-phosphate of ATP to the 4'-position of a tetraacyldisaccharide 1-phosphate intermediate (termed DS-1-P) to form tetraacyldisaccharide 1,4'-bis-phosphate (lipid IVA). In Dechloromonas aromatica (strain RCB), this protein is Tetraacyldisaccharide 4'-kinase.